Reading from the N-terminus, the 226-residue chain is MHIMEGFLPVEHAIGWSVASAPVVAYGLYSINKKIKKNPEQRMLLGVAAAFTFVLSALKMPSVTGSCSHPTGTGLGAILFGPSAVAPIGAVVLLFQALLLAHGGLTTLGANIFSMAIVGPFAAAAVFRLARAARFPFGVGVFLAASLGDLLTYVTTACQLAFAFPDPVGGFTASLAKFAGVFALTQIPLAISEGLLTVVVMNALLRFNREELGSLNIEGNGQEVQA.

The next 6 membrane-spanning stretches (helical) occupy residues 6-26 (GFLPVEHAIGWSVASAPVVAY), 43-63 (MLLGVAAAFTFVLSALKMPSV), 75-95 (LGAILFGPSAVAPIGAVVLLF), 107-127 (TLGANIFSMAIVGPFAAAAVF), 135-155 (FPFGVGVFLAASLGDLLTYVT), and 181-201 (VFALTQIPLAISEGLLTVVVM).

It belongs to the CbiM family. In terms of assembly, forms an energy-coupling factor (ECF) transporter complex composed of an ATP-binding protein (A component, CbiO), a transmembrane protein (T component, CbiQ) and 2 possible substrate-capture proteins (S components, CbiM and CbiN) of unknown stoichimetry.

It localises to the cell inner membrane. It participates in cofactor biosynthesis; adenosylcobalamin biosynthesis. Functionally, part of the energy-coupling factor (ECF) transporter complex CbiMNOQ involved in cobalt import. This chain is Cobalt transport protein CbiM 2, found in Pelobacter propionicus (strain DSM 2379 / NBRC 103807 / OttBd1).